Reading from the N-terminus, the 72-residue chain is Putative membrane protein insertion efficiency factor (72 aa).

Belongs to the UPF0161 family.

The protein resides in the cell inner membrane. Its function is as follows. Could be involved in insertion of integral membrane proteins into the membrane. The polypeptide is Putative membrane protein insertion efficiency factor (Trichodesmium erythraeum (strain IMS101)).